Reading from the N-terminus, the 790-residue chain is MDYVNVVDGSKKTMNSPEGAAPGLIGATGITNPTPDNDLPLQASNKLTRLSQSTSNDSKLIAAGEPKACDLERSRVGGSCKMTTPGHSNFVLKRDSVEGCPAKNSSMAESNGQTNPMHCRIVPLQSAEGDTNQGFGKNSLEQNNAKGDWVPISQSTVVLGTDGNTSVFPGTLTGDEEGDENKARGNWSNKLDFILSMVGYAVGLGNVWRFPYLAFKNGGGAFLIPYLTMLALAGLPIFYLEVALGQFASQGPISVWKAIPALQGCGIAMLIISVLIAIYYNIIMCYTIFYLFASLVYVLPWASCNNPWNTPDCKDKDRLLLDSCIISSQPNIQIKNSTFCMTAYPNLTMVNFTSHGNKSFVSGSEEYFKYNMLKISAGIEYPGEIRWPLVFCLFLAWIIVYASLAKGIKTSGKVVYSTATFPYVVLVILLFRGVTLPGAGDGIWWFIMPKWEKLMDATVWKDAATQIFFSLSAAWGGLITLSSYNKFHNNLYRDTLIVTCINSATSIFAGFVIFSVIGFMAHILNVDIEKVADQGPGIAFVVYPEALTRLPLSPFWAIIFFLMLLTLGLDTMFATIETIVTSVSDEFPKLLRTHKPLFTLVCCVAFFIMGFPMITQGGIYMLQLVDNYAASYSLVIIAIFELVGISYIYGLQRFCEDIEMMIGFQPSRFWKICWAFVTPTILTFILGFSFYQWEPMTYGSYHYPSWSMVMGWLMLACSVIWIPIMFVIKMFLAPGTFIERLKLVCSPQPDWGPFLAKHRGERYKNMIDPLGTSSLGLKLPPKDFELGTQC.

Residues 1–39 are disordered; the sequence is MDYVNVVDGSKKTMNSPEGAAPGLIGATGITNPTPDNDL. The Cytoplasmic portion of the chain corresponds to 1–192; that stretch reads MDYVNVVDGS…ARGNWSNKLD (192 aa). 3 helical membrane-spanning segments follow: residues 193-213, 220-240, and 264-284; these read FILS…FPYL, GAFL…IFYL, and GCGI…NIIM. 4 residues coordinate Na(+): Gly-199, Ala-201, Val-202, and Asn-206. The Extracellular segment spans residues 285–387; it reads CYTIFYLFAS…GIEYPGEIRW (103 aa). Cys-304 and Cys-313 form a disulfide bridge. 4 N-linked (GlcNAc...) asparagine glycosylation sites follow: Asn-336, Asn-346, Asn-351, and Asn-357. 3 helical membrane passes run 388–408, 427–447, and 463–483; these read PLVF…AKGI, VILL…WWFI, and AATQ…TLSS. Ser-470 and Asn-502 together coordinate Na(+). The next 6 membrane-spanning stretches (helical) occupy residues 504 to 524, 556 to 576, 597 to 617, 631 to 651, 672 to 692, and 708 to 728; these read ATSI…AHIL, WAII…FATI, LFTL…ITQG, SYSL…IYGL, ICWA…SFYQ, and MVMG…MFVI. Residues Leu-567 and Asp-570 each coordinate Na(+). The Cytoplasmic portion of the chain corresponds to 729–790; that stretch reads KMFLAPGTFI…PKDFELGTQC (62 aa).

This sequence belongs to the sodium:neurotransmitter symporter (SNF) (TC 2.A.22) family. SLC6A5 subfamily. As to expression, first expressed in late neurula stages in the anterior spinal cord, where expression intensifies through the tailbud stages, and by hatching, expression is seen in the hindbrain. During late hatching stages, expression extends along most of the length of the spinal cord, mildly intensifies in the hindbrain, and appears in localized regions of the lateral forebrain and medial midbrain. By the swimming tadpole stage, weak expression appears in the anterior hindbrain, with stronger expression in the posterior, postmitotic neurons.

It localises to the cell membrane. It carries out the reaction glycine(out) + chloride(out) + 3 Na(+)(out) = glycine(in) + chloride(in) + 3 Na(+)(in). Functionally, sodium- and chloride-dependent glycine transporter. Terminates the action of glycine by its high affinity sodium-dependent reuptake into presynaptic terminals. May be responsible for the termination of neurotransmission at strychnine-sensitive glycinergic synapses. The polypeptide is Sodium- and chloride-dependent glycine transporter 2 (Xenopus laevis (African clawed frog)).